A 103-amino-acid polypeptide reads, in one-letter code: MILVNTDYISKKELETLTIVKGSTIQSKHLGKDILSGFKTLVGGELTAYSDMMNEARAIATKRMVAEAQGVGADAIINIRYASSAVMGGAAEIMVYGTAVKFV.

This sequence belongs to the UPF0145 family.

The protein is UPF0145 protein Amet_0532 of Alkaliphilus metalliredigens (strain QYMF).